A 306-amino-acid chain; its full sequence is D-alanine--D-alanine ligase (306 aa).

In terms of domain architecture, ATP-grasp spans Arg101–Glu300. Met128–Thr182 serves as a coordination point for ATP. Mg(2+) contacts are provided by Asp250, Glu267, and Asn269.

Belongs to the D-alanine--D-alanine ligase family. It depends on Mg(2+) as a cofactor. Mn(2+) is required as a cofactor.

The protein localises to the cytoplasm. The enzyme catalyses 2 D-alanine + ATP = D-alanyl-D-alanine + ADP + phosphate + H(+). The protein operates within cell wall biogenesis; peptidoglycan biosynthesis. Functionally, cell wall formation. This Xanthobacter autotrophicus (strain ATCC BAA-1158 / Py2) protein is D-alanine--D-alanine ligase.